Consider the following 1287-residue polypeptide: DENN domain-containing protein 5A (1287 aa).

The 203-residue stretch at serine 57–serine 259 folds into the uDENN domain. Serine 193 is subject to Phosphoserine. Residues glutamate 278 to isoleucine 414 enclose the cDENN domain. The region spanning methionine 416 to aspartate 598 is the dDENN domain. The RUN 1 domain occupies valine 787 to threonine 950. Residues isoleucine 954–valine 1062 enclose the PLAT domain. Threonine 1079 is subject to Phosphothreonine. A phosphoserine mark is found at serine 1085, serine 1087, and serine 1096. An RUN 2 domain is found at threonine 1134–serine 1280.

Belongs to the RAB6IP1 family. As to quaternary structure, interacts with RAB6A bound to GTP.

Its subcellular location is the golgi apparatus membrane. Functionally, guanine nucleotide exchange factor (GEF) which may activate RAB6A and RAB39A and/or RAB39B. Promotes the exchange of GDP to GTP, converting inactive GDP-bound Rab proteins into their active GTP-bound form. Involved in the negative regulation of neurite outgrowth. The chain is DENN domain-containing protein 5A (Dennd5a) from Mus musculus (Mouse).